Consider the following 859-residue polypeptide: Leucine--tRNA ligase (859 aa).

Residues 42–52 (PYPSGKLHVGH) carry the 'HIGH' region motif. The 'KMSKS' region signature appears at 611-615 (KMSKS). Lysine 614 is an ATP binding site.

It belongs to the class-I aminoacyl-tRNA synthetase family.

It is found in the cytoplasm. The catalysed reaction is tRNA(Leu) + L-leucine + ATP = L-leucyl-tRNA(Leu) + AMP + diphosphate. This is Leucine--tRNA ligase from Fusobacterium nucleatum subsp. nucleatum (strain ATCC 25586 / DSM 15643 / BCRC 10681 / CIP 101130 / JCM 8532 / KCTC 2640 / LMG 13131 / VPI 4355).